A 251-amino-acid polypeptide reads, in one-letter code: Cytochrome c oxidase subunit 2 (251 aa).

A signal peptide spans 1 to 15; the sequence is MLNLLYNQIFNVILN. Over 16-41 the chain is Mitochondrial intermembrane; that stretch reads DVPTPYNTYFQDSATPNQEGILELHD. A helical membrane pass occupies residues 42–62; the sequence is NIMFYLLVILGLVSWLLFTIT. Over 63–82 the chain is Mitochondrial matrix; that stretch reads RTYSKNPIAYKYIKHGQTIE. Residues 83–103 traverse the membrane as a helical segment; sequence IIWTIFPAVILLIIAFPSFIL. The Mitochondrial intermembrane segment spans residues 104–251; sequence LYLCDEVISP…PAFLEWLNEQ (148 aa). Positions 186, 221, 223, 225, 229, and 232 each coordinate Cu cation. E223 serves as a coordination point for Mg(2+).

It belongs to the cytochrome c oxidase subunit 2 family. In terms of assembly, component of the cytochrome c oxidase (complex IV, CIV), a multisubunit enzyme composed of a catalytic core of 3 subunits and several supernumerary subunits. The complex exists as a monomer or a dimer and forms supercomplexes (SCs) in the inner mitochondrial membrane with ubiquinol-cytochrome c oxidoreductase (cytochrome b-c1 complex, complex III, CIII). It depends on Cu cation as a cofactor. The signal sequence of COX2 is processed by IMP1.

The protein localises to the mitochondrion inner membrane. The enzyme catalyses 4 Fe(II)-[cytochrome c] + O2 + 8 H(+)(in) = 4 Fe(III)-[cytochrome c] + 2 H2O + 4 H(+)(out). Component of the cytochrome c oxidase, the last enzyme in the mitochondrial electron transport chain which drives oxidative phosphorylation. The respiratory chain contains 3 multisubunit complexes succinate dehydrogenase (complex II, CII), ubiquinol-cytochrome c oxidoreductase (cytochrome b-c1 complex, complex III, CIII) and cytochrome c oxidase (complex IV, CIV), that cooperate to transfer electrons derived from NADH and succinate to molecular oxygen, creating an electrochemical gradient over the inner membrane that drives transmembrane transport and the ATP synthase. Cytochrome c oxidase is the component of the respiratory chain that catalyzes the reduction of oxygen to water. Electrons originating from reduced cytochrome c in the intermembrane space (IMS) are transferred via the dinuclear copper A center (CU(A)) of subunit 2 and heme A of subunit 1 to the active site in subunit 1, a binuclear center (BNC) formed by heme A3 and copper B (CU(B)). The BNC reduces molecular oxygen to 2 water molecules using 4 electrons from cytochrome c in the IMS and 4 protons from the mitochondrial matrix. The sequence is that of Cytochrome c oxidase subunit 2 (COX2) from Lachancea thermotolerans (strain ATCC 56472 / CBS 6340 / NRRL Y-8284) (Yeast).